We begin with the raw amino-acid sequence, 4473 residues long: Plectin (4473 aa).

Calponin-homology (CH) domains follow at residues 1-74 (DGHN…LHFQ) and 87-192 (MTAK…DAMP). The actin-binding stretch occupies residues 1–192 (DGHNLISLLE…YVSSLYDAMP (192 aa)). Residues 1–1259 (DGHNLISLLE…SELTTLTSQY (1259 aa)) are globular 1. The stretch at 449-508 (RYLQDLLAWVEENQRRIDSAEWGVDLPSVEAQLGSHRGMHQSIEEFRAKIERARNDESQL) is one Spectrin 1 repeat. At serine 509 the chain carries Phosphoserine. Spectrin repeat units lie at residues 529–613 (KLLN…REDH) and 626–719 (LQTQ…AIVQ). Threonine 604 bears the Phosphothreonine mark. One can recognise an SH3 domain in the interval 730 to 787 (RGHVPLMAVCDYKQVEVTVHKGDQCQLVGPAQPSHWKVLRGPSSEAAVPSVCFLVPPP). Serine 836 is modified (phosphoserine). Residues 1104-1204 (RERVNQLLER…QKFAKQYINA (101 aa)) form a Spectrin 4 repeat. Serine 1224 carries the post-translational modification Phosphoserine. Residues 1258–2548 (QYIKFISETL…EEIAATQAAA (1291 aa)) adopt a coiled-coil conformation. The interval 1260–2544 (IKFISETLRR…LAHSEEIAAT (1285 aa)) is central fibrous rod domain. 2 disordered regions span residues 1274 to 1293 (ERLA…EGEA) and 1407 to 1434 (RAEE…DESQ). Serine 1510 bears the Phosphoserine mark. At lysine 1514 the chain carries N6-acetyllysine. 5 disordered regions span residues 1529–1550 (VTQL…ERAR), 1582–1616 (SLAQ…RELA), 1881–1929 (AEDT…AARQ), 1950–1971 (LRER…AAQK), and 2003–2098 (ERLR…KHKK). Composition is skewed to basic and acidic residues over residues 1587–1616 (DAEK…RELA), 1881–1897 (AEDT…EAAR), and 1905–1917 (EEQR…ERVQ). Residues 1959–1968 (ARQLQLAQEA) show a composition bias toward low complexity. A compositionally biased stretch (basic and acidic residues) spans 2003–2047 (ERLRGEAEAARRAAEEAEEAREQAEREAAQSRKQVEEAERLKQSA). Residues 2048-2061 (EEQAQARAQAQAAA) are compositionally biased toward low complexity. The segment covering 2062–2077 (EKLRKEAEQEAARRAQ) has biased composition (basic and acidic residues). Phosphoserine is present on serine 2420. An N6-acetyllysine modification is found at lysine 2425. Residues 2457–2476 (REEQQRQQRQMEQEKQELVA) form a disordered region. Residues 2545-4473 (QAAAAKALPN…SLGGPESAVA (1929 aa)) form a globular 2 region. 2 positions are modified to phosphoserine: serine 2563 and serine 2591. 5 Plectin repeats span residues 2615–2652 (RQYL…PGTA), 2653–2690 (LILL…PELH), 2691–2728 (HKLL…RDHA), 2729–2766 (IRLL…EEMS), and 2770–2804 (ADPG…PETG). Threonine 2675 bears the Phosphothreonine mark. At tyrosine 2822 the chain carries Phosphotyrosine. An N6-acetyllysine mark is found at lysine 2842 and lysine 2880. Plectin repeat units follow at residues 2905-2942 (ALVP…ADSV), 2943-2980 (RRAL…PDVA), 2981-3018 (VALL…PELH), 3019-3056 (EKLL…REQG), and 3057-3094 (LRLL…KETN). Position 3151 is a phosphotyrosine (tyrosine 3151). The residue at position 3209 (lysine 3209) is an N6-acetyllysine. 5 Plectin repeats span residues 3274–3311 (RTLL…PSTA), 3312–3349 (TLLL…PELH), 3350–3387 (EKLL…REHA), 3388–3425 (IRLL…EEMS), and 3429–3463 (ADPS…PETG). Phosphothreonine is present on threonine 3574. Phosphotyrosine is present on tyrosine 3579. Plectin repeat units lie at residues 3609–3646 (WRYL…AEVA), 3647–3684 (RLLL…PELH), 3685–3722 (DRLL…AEEA), 3723–3760 (LRLL…KDTH), 3764–3797 (SEPS…DGSG), and 3800–3834 (LLPL…EATA). Position 3819 is a phosphothreonine (threonine 3819). Serine 3843 is modified (phosphoserine). 6 Plectin repeats span residues 3852–3889 (QKFL…PGTA), 3890–3927 (FELL…PEFK), 3928–3965 (DRLL…KDHG), 3966–4003 (IRLL…EEMN), 4007–4041 (TDPS…PQTG), and 4043–4094 (RLLP…HQTY). Residues 4039–4089 (QTGLRLLPLKEKKRERKTSSKSSVRKRRVVIVDPETSKEMSVYEAYRKGLI) are binding to intermediate filaments. 8 positions are modified to phosphoserine: serine 4171, serine 4173, serine 4174, serine 4175, serine 4178, serine 4179, serine 4180, and serine 4181. Tyrosine 4182 is modified (phosphotyrosine). Serine 4185, serine 4189, and serine 4195 each carry phosphoserine. 5 Plectin repeats span residues 4197–4234 (SDPT…NITG), 4235–4272 (QRLL…KIMV), 4273–4310 (DRIN…YEAG), 4311–4348 (QRFL…ARTA), and 4349–4386 (QKLR…EGTG). Residue threonine 4200 is modified to Phosphothreonine. Threonine 4328 bears the Phosphothreonine; by CDK1 mark. Phosphoserine is present on residues serine 4396 and serine 4402. Over residues 4400-4460 (YYSPYSVSGS…SGYGRRYASG (61 aa)) the composition is skewed to low complexity. Residues 4400-4473 (YYSPYSVSGS…SLGGPESAVA (74 aa)) are disordered. A Phosphotyrosine modification is found at tyrosine 4404. Serine 4405, serine 4407, and serine 4411 each carry phosphoserine. Threonine 4412 bears the Phosphothreonine mark. The 4 X 4 AA tandem repeats of G-S-R-X stretch occupies residues 4414–4429 (GSRTGSRTGSRAGSRR). Serine 4415 carries the phosphoserine modification. Residues arginine 4416 and arginine 4429 each carry the omega-N-methylarginine modification. Phosphoserine is present on residues serine 4431 and serine 4464.

Belongs to the plakin or cytolinker family. Homodimer or homotetramer. Interacts (via actin-binding domain) with SYNE3. Interacts (via calponin-homology (CH) 1 domain) with VIM (via rod region). Interacts (via N-terminus) with DST isoform 2 (via N-terminus). Interacts with FER. Interacts with TOR1A. Interacts with ANK3. Identified in complexes that contain VIM, EZR, AHNAK, BFSP1, BFSP2, ANK2, PLEC, PRX and spectrin. Phosphorylated by CDK1; regulates dissociation from intermediate filaments during mitosis.

It is found in the cytoplasm. Its subcellular location is the cytoskeleton. The protein localises to the cell junction. The protein resides in the hemidesmosome. It localises to the cell projection. It is found in the podosome. Its function is as follows. Interlinks intermediate filaments with microtubules and microfilaments and anchors intermediate filaments to desmosomes or hemidesmosomes. May be involved not only in the cross-linking and stabilization of cytoskeletal intermediate filaments network, but also in the regulation of their dynamics. This chain is Plectin (PLEC), found in Cricetulus griseus (Chinese hamster).